A 557-amino-acid chain; its full sequence is Probable protein kinase UbiB (557 aa).

The 389-residue stretch at 121–509 (SFDTVPLASA…RKLQTRVVTA (389 aa)) folds into the Protein kinase domain. Residues 127–135 (LASASIAQV) and lysine 154 each bind ATP. The active-site Proton acceptor is the aspartate 289. Helical transmembrane passes span 506–526 (VVTA…YGLH) and 535–555 (VPVW…VAWL).

Belongs to the ABC1 family. UbiB subfamily.

Its subcellular location is the cell inner membrane. Its pathway is cofactor biosynthesis; ubiquinone biosynthesis [regulation]. Is probably a protein kinase regulator of UbiI activity which is involved in aerobic coenzyme Q (ubiquinone) biosynthesis. This Xanthomonas oryzae pv. oryzae (strain MAFF 311018) protein is Probable protein kinase UbiB.